We begin with the raw amino-acid sequence, 605 residues long: DNA mismatch repair protein MutL (605 aa).

It belongs to the DNA mismatch repair MutL/HexB family.

Functionally, this protein is involved in the repair of mismatches in DNA. It is required for dam-dependent methyl-directed DNA mismatch repair. May act as a 'molecular matchmaker', a protein that promotes the formation of a stable complex between two or more DNA-binding proteins in an ATP-dependent manner without itself being part of a final effector complex. This Pelotomaculum thermopropionicum (strain DSM 13744 / JCM 10971 / SI) protein is DNA mismatch repair protein MutL.